Reading from the N-terminus, the 576-residue chain is D-lactate dehydrogenase [cytochrome], mitochondrial (576 aa).

Residues Glu139 to Arg320 enclose the FAD-binding PCMH-type domain.

The protein belongs to the FAD-binding oxidoreductase/transferase type 4 family. It depends on FAD as a cofactor. Zn(2+) serves as cofactor.

Its subcellular location is the mitochondrion matrix. The catalysed reaction is (R)-lactate + 2 Fe(III)-[cytochrome c] = 2 Fe(II)-[cytochrome c] + pyruvate + 2 H(+). Catalyzes the stereospecific oxidation of D-lactate to pyruvate. The polypeptide is D-lactate dehydrogenase [cytochrome], mitochondrial (DLD1) (Kluyveromyces lactis (strain ATCC 8585 / CBS 2359 / DSM 70799 / NBRC 1267 / NRRL Y-1140 / WM37) (Yeast)).